Reading from the N-terminus, the 494-residue chain is Glycerol kinase (494 aa).

ADP is bound at residue Thr-13. ATP-binding residues include Thr-13, Thr-14, and Ser-15. Thr-13 serves as a coordination point for sn-glycerol 3-phosphate. Residue Arg-17 participates in ADP binding. Positions 83, 84, 135, and 244 each coordinate sn-glycerol 3-phosphate. Glycerol contacts are provided by Arg-83, Glu-84, Tyr-135, Asp-244, and Gln-245. Positions 266 and 309 each coordinate ADP. ATP is bound by residues Thr-266, Gly-309, Gln-313, and Gly-410. The ADP site is built by Gly-410 and Asn-414.

It belongs to the FGGY kinase family.

The enzyme catalyses glycerol + ATP = sn-glycerol 3-phosphate + ADP + H(+). It functions in the pathway polyol metabolism; glycerol degradation via glycerol kinase pathway; sn-glycerol 3-phosphate from glycerol: step 1/1. With respect to regulation, inhibited by fructose 1,6-bisphosphate (FBP). In terms of biological role, key enzyme in the regulation of glycerol uptake and metabolism. Catalyzes the phosphorylation of glycerol to yield sn-glycerol 3-phosphate. The protein is Glycerol kinase of Shewanella sp. (strain MR-4).